The chain runs to 197 residues: UPF0319 protein VP0761 (197 aa).

A signal peptide spans 1–20; the sequence is MKKTTTLLGICAILSAPAFA.

This sequence belongs to the UPF0319 family.

In Vibrio parahaemolyticus serotype O3:K6 (strain RIMD 2210633), this protein is UPF0319 protein VP0761.